A 105-amino-acid polypeptide reads, in one-letter code: Large ribosomal subunit protein bL21 (105 aa).

It belongs to the bacterial ribosomal protein bL21 family. Part of the 50S ribosomal subunit. Contacts protein L20.

This protein binds to 23S rRNA in the presence of protein L20. This chain is Large ribosomal subunit protein bL21, found in Blochmanniella pennsylvanica (strain BPEN).